The primary structure comprises 345 residues: Ferrochelatase (345 aa).

The Fe cation site is built by His192 and Glu295.

The protein belongs to the ferrochelatase family.

The protein resides in the cytoplasm. It catalyses the reaction heme b + 2 H(+) = protoporphyrin IX + Fe(2+). It functions in the pathway porphyrin-containing compound metabolism; protoheme biosynthesis; protoheme from protoporphyrin-IX: step 1/1. Functionally, catalyzes the ferrous insertion into protoporphyrin IX. The chain is Ferrochelatase from Opitutus terrae (strain DSM 11246 / JCM 15787 / PB90-1).